Here is a 1840-residue protein sequence, read N- to C-terminus: Neurexin 1 (1840 aa).

The disordered stretch occupies residues 1–50; sequence MKAPHSATYQDNYADAAMTARTRPSMDMDQQRNRNQAELRLLPAQRTSTS. The Extracellular segment spans residues 1-1696; the sequence is MKAPHSATYQ…NSIEEERTAM (1696 aa). The span at 24–37 shows a compositional bias: basic and acidic residues; the sequence is PSMDMDQQRNRNQA. The Laminin G-like 1 domain maps to 104 to 289; sequence GFQLDGSQNS…RDIKCGDVPC (186 aa). Residues 309-347 enclose the EGF-like 1 domain; that stretch reads TTDACERNDPCQHGGICISTDSGPICECRNLEYDGQYCE. 8 cysteine pairs are disulfide-bonded: Cys313-Cys325, Cys319-Cys334, Cys336-Cys346, Cys511-Cys547, Cys710-Cys739, Cys746-Cys757, Cys751-Cys766, and Cys768-Cys778. 2 consecutive Laminin G-like domains span residues 352-547 and 554-739; these read PSEA…EYQC and DPVT…KPSC. One can recognise an EGF-like 2 domain in the interval 742–779; the sequence is QANVCNGNPCLNGGTCLEGWNRPICDCSATLYGGPTCG. 2 consecutive Laminin G-like domains span residues 784–964 and 982–1158; these read TLAF…LPSA and HAAT…VSGC. Disulfide bonds link Cys1130/Cys1158, Cys1164/Cys1175, Cys1169/Cys1184, and Cys1186/Cys1196. An EGF-like 3 domain is found at 1160-1197; sequence GPTKCSQNACANRGNCVQQWNAYACECDMTSYTGPTCY. The region spanning 1201–1416 is the Laminin G-like 6 domain; it reads IAYEFGNNKG…LIFSGAGSGC (216 aa). Residues 1411-1651 are disordered; that stretch reads GAGSGCRGDD…DEHHPLPPLP (241 aa). The segment covering 1447–1472 has biased composition (low complexity); the sequence is QTTTSQQGNSLSTGGSSSGGVITNGT. The span at 1491–1527 shows a compositional bias: polar residues; the sequence is TTEQFTSTSTARGSESNNEMVTITTTGRSDVTTEQHQ. The segment covering 1528 to 1600 has biased composition (low complexity); that stretch reads GSSSSSSSGS…TTTTTTTTQA (73 aa). Residues 1632–1646 show a composition bias toward basic and acidic residues; it reads RNDHDRMQLPDEHHP. The chain crosses the membrane as a helical span at residues 1697–1717; that stretch reads IIGIVAGILIAVVLVILLVLW. Residues 1718–1840 are Cytoplasmic-facing; sequence LKSNGDRGYK…DSKDVKEWYV (123 aa). The segment at 1737–1840 is disordered; that stretch reads GSHNPNAALL…DSKDVKEWYV (104 aa). Polar residues predominate over residues 1747-1757; that stretch reads GNTSTNGSYHQ. Low complexity predominate over residues 1774 to 1787; it reads QQQHHAQQQMHNGH. The span at 1788–1813 shows a compositional bias: gly residues; that stretch reads NGNGNGGGGGGGGMMSSGSGSLGYGS. Zn(2+) contacts are provided by Asp1831 and Asp1834. The segment covering 1831–1840 has biased composition (basic and acidic residues); that stretch reads DSKDVKEWYV. Positions 1837–1840 match the PDZ domain binding motif; sequence EWYV.

This sequence belongs to the neurexin family. Interacts (via C-terminal PDZ binding motif) with CASK (via PDZ domain). Interacts (via cytoplasmic domain) with apolpp/ApoLI; the interaction supports apolpp/ApoLI protein stability. Interact (via cytoplasmic domain) with Spn/Spinophilin. Interacts with RhoGAP100F/Syd-1 (via PDZ domain); RhoGAP100F/Syd-1 may recruit Nrx-1 to the presynaptic active zone. In terms of tissue distribution, expressed in brain, with expression in medulla, lamina, lobula, lobula plate, mushroom body and antennal lobe, and in retina (at protein level). Expressed in rabdomere of photoreceptor cells (at protein level).

The protein resides in the synaptic cell membrane. It localises to the presynaptic cell membrane. The protein localises to the postsynaptic cell membrane. In terms of biological role, neuronal cell adhesion protein involved in synapse formation, development of synaptic active zones, synaptic regulation and visual function. Plays a role in cell adhesion between the pre- and the postsynaptic cell. Required for proper proliferation of synaptic boutons during larval development, a process necessary for coordinated matching of pre-and postsynaptic compartments. Promotes presynaptic active zone formation and neurotransmitter release. Spn/Spinophilin fine-tunes nrx-1/nlg1 signaling at the pre-synapse to control active zone number and functionality and thereby optimizing action potential-induced exocytosis. Required for synapse formation in central nervous system. By regulating synapse formation, may play a role in larval associative learning. Together with RhoGAP100F/syd-1, controls synapse formation at the neuromuscular junction. Essential for synaptic vesicle cycling, which plays critical roles in neurotransmission at neuromuscular junctions (NMJ). Regulated and restricts formation of glutamate receptor clusters. Mediates retinoid transport and subsequent rhodopsin maturation and may regulate lipoprotein function; thereby playing a role in vision. Regulates sleep, circadian rhythm and synaptic plasticity. Together with CASK, required for locomotion. In Drosophila melanogaster (Fruit fly), this protein is Neurexin 1.